The chain runs to 229 residues: Putative N-acetylmannosamine-6-phosphate 2-epimerase (229 aa).

It belongs to the NanE family.

It catalyses the reaction an N-acyl-D-glucosamine 6-phosphate = an N-acyl-D-mannosamine 6-phosphate. It functions in the pathway amino-sugar metabolism; N-acetylneuraminate degradation; D-fructose 6-phosphate from N-acetylneuraminate: step 3/5. In terms of biological role, converts N-acetylmannosamine-6-phosphate (ManNAc-6-P) to N-acetylglucosamine-6-phosphate (GlcNAc-6-P). The sequence is that of Putative N-acetylmannosamine-6-phosphate 2-epimerase from Salmonella arizonae (strain ATCC BAA-731 / CDC346-86 / RSK2980).